We begin with the raw amino-acid sequence, 211 residues long: MMGKLEKPVIIGIAGGSGSGKTTIAHEIANNINEHDRIMIMSQDSYYQDNTGVPMEKRMKINYDHPDAFDMPLLEAQLNQLLHRKPIELPTYDFTQHTRSNETIHVEPADIIILEGILVLFNEDIRNLMDIKVYVDTDDDIRFIRRLERDMKERGRSLDSVINQYLGTVKPMYNQFIEPTKRYADIIVPEGGENDVAIDMLTTKLQSVLNQ.

15 to 22 (GGSGSGKT) serves as a coordination point for ATP.

It belongs to the uridine kinase family.

It localises to the cytoplasm. The catalysed reaction is uridine + ATP = UMP + ADP + H(+). It carries out the reaction cytidine + ATP = CMP + ADP + H(+). The protein operates within pyrimidine metabolism; CTP biosynthesis via salvage pathway; CTP from cytidine: step 1/3. It functions in the pathway pyrimidine metabolism; UMP biosynthesis via salvage pathway; UMP from uridine: step 1/1. This Lactobacillus helveticus (strain DPC 4571) protein is Uridine kinase.